A 617-amino-acid chain; its full sequence is V-type proton ATPase catalytic subunit A (617 aa).

250–257 (GAFGCGKT) provides a ligand contact to ATP. Ser384 is subject to Phosphoserine; by AMPK.

The protein belongs to the ATPase alpha/beta chains family. V-ATPase is a heteromultimeric enzyme made up of two complexes: the ATP-hydrolytic V1 complex and the proton translocation V0 complex. The V1 complex consists of three catalytic AB heterodimers that form a heterohexamer, three peripheral stalks each consisting of EG heterodimers, one central rotor including subunits D and F, and the regulatory subunits C and H. The proton translocation complex V0 consists of the proton transport subunit a, a ring of proteolipid subunits c9c'', rotary subunit d, subunits e and f, and the accessory subunits ATP6AP1/Ac45 and ATP6AP2/PRR. Interacts with the V0 complex V-ATPase subunit a4 ATP6V0A4. Interacts with WFS1. Interacts with alpha-crystallin B chain/CRYAB and with MTOR, forming a ternary complex. In terms of processing, phosphorylation at Ser-384 by AMPK down-regulates its enzyme activity.

Its subcellular location is the cytoplasm. The protein resides in the cytosol. It localises to the cytoplasmic vesicle. The protein localises to the secretory vesicle. It is found in the clathrin-coated vesicle membrane. Its subcellular location is the lysosome. It catalyses the reaction ATP + H2O + 4 H(+)(in) = ADP + phosphate + 5 H(+)(out). With respect to regulation, ATP hydrolysis occurs at the interface between the nucleotide-binding domains of subunits A and B. ATP hydrolysis triggers a conformational change in the subunits D and F, which induces a shift of subunit d. The c-ring is subsequently rotated and results in a continuous proton translocation across the membrane. Functionally, catalytic subunit of the V1 complex of vacuolar(H+)-ATPase (V-ATPase), a multisubunit enzyme composed of a peripheral complex (V1) that hydrolyzes ATP and a membrane integral complex (V0) that translocates protons. V-ATPase is responsible for acidifying and maintaining the pH of intracellular compartments and in some cell types, is targeted to the plasma membrane, where it is responsible for acidifying the extracellular environment. In aerobic conditions, involved in intracellular iron homeostasis, thus triggering the activity of Fe(2+) prolyl hydroxylase (PHD) enzymes, and leading to HIF1A hydroxylation and subsequent proteasomal degradation. May play a role in neurite development and synaptic connectivity. This chain is V-type proton ATPase catalytic subunit A (Atp6v1a), found in Mus musculus (Mouse).